Here is a 334-residue protein sequence, read N- to C-terminus: Phosphate acyltransferase (334 aa).

Belongs to the PlsX family. Homodimer. Probably interacts with PlsY.

Its subcellular location is the cytoplasm. It catalyses the reaction a fatty acyl-[ACP] + phosphate = an acyl phosphate + holo-[ACP]. Its pathway is lipid metabolism; phospholipid metabolism. Catalyzes the reversible formation of acyl-phosphate (acyl-PO(4)) from acyl-[acyl-carrier-protein] (acyl-ACP). This enzyme utilizes acyl-ACP as fatty acyl donor, but not acyl-CoA. In Thermotoga petrophila (strain ATCC BAA-488 / DSM 13995 / JCM 10881 / RKU-1), this protein is Phosphate acyltransferase.